Here is a 627-residue protein sequence, read N- to C-terminus: Mitochondrial distribution and morphology protein 34 (627 aa).

An SMP-LTD domain is found at 1-195 (MAFNFNWSPL…LPAIIHRLSL (195 aa)). 4 disordered regions span residues 209–230 (SAQVTNPSLDGPGLDPLLNPPQ), 332–470 (ASLA…RTSP), 486–557 (LQRQ…SRPS), and 586–627 (RIQD…AYRH). Low complexity-rich tracts occupy residues 215-225 (PSLDGPGLDPL) and 332-341 (ASLASSSHSR). Basic residues predominate over residues 360-372 (RHSKAHARKRKKR). Residues 373-384 (VVDLRRRPKSAD) are compositionally biased toward basic and acidic residues. Low complexity predominate over residues 390 to 412 (SGESAYTETSTTTSAVSVFSGST). Residues 436-451 (TLRDRIAARDDAERNS) show a composition bias toward basic and acidic residues. Positions 528-557 (PNASNNYTSSSSPSARDPQQQQPQQLSRPS) are enriched in low complexity.

Belongs to the MDM34 family. In terms of assembly, component of the ER-mitochondria encounter structure (ERMES) or MDM complex, composed of MMM1, MDM10, MDM12 and MDM34.

The protein localises to the mitochondrion outer membrane. Its function is as follows. Component of the ERMES/MDM complex, which serves as a molecular tether to connect the endoplasmic reticulum (ER) and mitochondria. Components of this complex are involved in the control of mitochondrial shape and protein biogenesis, and function in nonvesicular lipid trafficking between the ER and mitochondria. MDM34 is required for the interaction of the ER-resident membrane protein MMM1 and the outer mitochondrial membrane-resident beta-barrel protein MDM10. The protein is Mitochondrial distribution and morphology protein 34 of Blastomyces gilchristii (strain SLH14081) (Blastomyces dermatitidis).